The chain runs to 461 residues: Metacaspase-1 (461 aa).

4 stretches are compositionally biased toward gly residues: residues Met1–Gly21, Gln45–Pro66, Gln74–Pro86, and Pro105–Gly119. Residues Met1–Thr154 form a disordered region. Composition is skewed to low complexity over residues Gly121 to Gln131 and His138 to Asn148. Active-site residues include His252 and Cys308.

This sequence belongs to the peptidase C14B family.

Involved in cell death (apoptosis). This is Metacaspase-1 (MCA1) from Yarrowia lipolytica (strain CLIB 122 / E 150) (Yeast).